A 1405-amino-acid polypeptide reads, in one-letter code: DNA-directed RNA polymerase subunit beta' (1405 aa).

Positions 70, 72, 85, and 88 each coordinate Zn(2+). Mg(2+) is bound by residues aspartate 460, aspartate 462, and aspartate 464. Zn(2+)-binding residues include cysteine 814, cysteine 888, cysteine 895, and cysteine 898.

The protein belongs to the RNA polymerase beta' chain family. The RNAP catalytic core consists of 2 alpha, 1 beta, 1 beta' and 1 omega subunit. When a sigma factor is associated with the core the holoenzyme is formed, which can initiate transcription. The cofactor is Mg(2+). Zn(2+) serves as cofactor.

It carries out the reaction RNA(n) + a ribonucleoside 5'-triphosphate = RNA(n+1) + diphosphate. In terms of biological role, DNA-dependent RNA polymerase catalyzes the transcription of DNA into RNA using the four ribonucleoside triphosphates as substrates. The protein is DNA-directed RNA polymerase subunit beta' of Shewanella oneidensis (strain ATCC 700550 / JCM 31522 / CIP 106686 / LMG 19005 / NCIMB 14063 / MR-1).